A 397-amino-acid polypeptide reads, in one-letter code: Odorant receptor 59a (397 aa).

Residues 1–36 (MAEVRVDSLEFFKSHWTAWRYLGVAHFRVENWKNLY) lie on the Cytoplasmic side of the membrane. A helical membrane pass occupies residues 37-57 (VFYSIVSNLLVTLCYPVHLGI). The Extracellular segment spans residues 58 to 68 (SLFRNRTITED). N62 carries N-linked (GlcNAc...) asparagine glycosylation. A helical membrane pass occupies residues 69–92 (ILNLTTFATCTACSVKCLLYAYNI). Residues 93 to 128 (KDVLEMERLLRLLDERVVGPEQRSIYGQVRVQLRNV) are Cytoplasmic-facing. The chain crosses the membrane as a helical span at residues 129-149 (LYVFIGIYMPCALFAELSFLF). Residues 150–179 (KEERGLMYPAWFPFDWLHSTRNYYIANAYQ) lie on the Extracellular side of the membrane. A helical membrane pass occupies residues 180–200 (IVGISFQLLQNYVSDCFPAVV). The Cytoplasmic portion of the chain corresponds to 201 to 274 (LCLISSHIKM…IEAFISLPML (74 aa)). A helical transmembrane segment spans residues 275-295 (IQFTVTALNVCIGLAALVFFV). At 296-301 (SEPMAR) the chain is on the extracellular side. A helical membrane pass occupies residues 302–322 (MYFIFYSLAMPLQIFPSCFFG). The Cytoplasmic segment spans residues 323-372 (TDNEYWFGRLHYAAFSCNWHTQNRSFKRKMMLFVEQSLKKSTAVAGGMMR). The chain crosses the membrane as a helical span at residues 373–393 (IHLDTFFSTLKGAYSLFTIII). The Extracellular portion of the chain corresponds to 394 to 397 (RMRK).

It belongs to the insect chemoreceptor superfamily. Heteromeric odorant receptor channel (TC 1.A.69) family. Or2a subfamily. Interacts with Orco. Complexes exist early in the endomembrane system in olfactory sensory neurons (OSNs), coupling these complexes to the conserved ciliary trafficking pathway. In terms of tissue distribution, expressed in neurons of the third antennal segment.

Its subcellular location is the cell membrane. Odorant receptor which mediates acceptance or avoidance behavior, depending on its substrates. The odorant receptor repertoire encodes a large collection of odor stimuli that vary widely in identity, intensity, and duration. May form a complex with Orco to form odorant-sensing units, providing sensitive and prolonged odorant signaling and calcium permeability. Involved in the behavioral responses to ethyl acetate, anisole, hexanoic acid, and pyrazines. This chain is Odorant receptor 59a (Or59a), found in Drosophila melanogaster (Fruit fly).